We begin with the raw amino-acid sequence, 298 residues long: Glyoxalase domain-containing protein 4 (298 aa).

Positions 5-130 (RALHFVFKVK…GGYKFYLQDR (126 aa)) constitute a VOC 1 domain. At Lys109 the chain carries N6-succinyllysine. Ser131 carries the phosphoserine modification. One can recognise a VOC 2 domain in the interval 137 to 258 (PVLKVTLAVS…DGHEICFVGD (122 aa)). Lys273 carries the N6-succinyllysine modification.

The protein belongs to the glyoxalase I family. In terms of assembly, interacts with NUDT9.

It localises to the mitochondrion. In Mus musculus (Mouse), this protein is Glyoxalase domain-containing protein 4 (Glod4).